A 311-amino-acid polypeptide reads, in one-letter code: Porphobilinogen deaminase (311 aa).

At Cys242 the chain carries S-(dipyrrolylmethanemethyl)cysteine.

This sequence belongs to the HMBS family. In terms of assembly, monomer. Requires dipyrromethane as cofactor.

It catalyses the reaction 4 porphobilinogen + H2O = hydroxymethylbilane + 4 NH4(+). It functions in the pathway porphyrin-containing compound metabolism; protoporphyrin-IX biosynthesis; coproporphyrinogen-III from 5-aminolevulinate: step 2/4. Its function is as follows. Tetrapolymerization of the monopyrrole PBG into the hydroxymethylbilane pre-uroporphyrinogen in several discrete steps. In Vibrio cholerae serotype O1 (strain ATCC 39315 / El Tor Inaba N16961), this protein is Porphobilinogen deaminase (hemC).